The sequence spans 375 residues: 23S rRNA (uracil(747)-C(5))-methyltransferase RlmC (375 aa).

[4Fe-4S] cluster is bound by residues C3, C11, C14, and C87. Residues Q212, F241, E262, and N307 each coordinate S-adenosyl-L-methionine. The active-site Nucleophile is the C334.

Belongs to the class I-like SAM-binding methyltransferase superfamily. RNA M5U methyltransferase family. RlmC subfamily.

It catalyses the reaction uridine(747) in 23S rRNA + S-adenosyl-L-methionine = 5-methyluridine(747) in 23S rRNA + S-adenosyl-L-homocysteine + H(+). Functionally, catalyzes the formation of 5-methyl-uridine at position 747 (m5U747) in 23S rRNA. This is 23S rRNA (uracil(747)-C(5))-methyltransferase RlmC from Pectobacterium atrosepticum (strain SCRI 1043 / ATCC BAA-672) (Erwinia carotovora subsp. atroseptica).